Here is a 102-residue protein sequence, read N- to C-terminus: Parathymosin (102 aa).

Positions 1 to 102 (MSEKSVEAAA…RQKTENGASA (102 aa)) are disordered. Position 2 is an N-acetylserine (serine 2). Serine 2 bears the Phosphoserine mark. Position 4 is an N6-acetyllysine (lysine 4). Phosphoserine occurs at positions 5 and 13. Residues 13 to 37 (SAKDLKEKKDKVEEKAGRKERKKEV) are compositionally biased toward basic and acidic residues. The residue at position 15 (lysine 15) is an N6-acetyllysine. Positions 38–75 (VEEEENGAEEEEEETAEDGEDDDEGDEEDEEEEEEEDE) are enriched in acidic residues. Threonine 52 is modified (phosphothreonine). Lysine 92 bears the N6-acetyllysine mark.

The protein belongs to the pro/parathymosin family.

Its function is as follows. Parathymosin may mediate immune function by blocking the effect of prothymosin alpha which confers resistance to certain opportunistic infections. In Rattus norvegicus (Rat), this protein is Parathymosin (Ptms).